The sequence spans 140 residues: UPF0179 protein Msp_0996 (140 aa).

The protein belongs to the UPF0179 family.

The sequence is that of UPF0179 protein Msp_0996 from Methanosphaera stadtmanae (strain ATCC 43021 / DSM 3091 / JCM 11832 / MCB-3).